Here is a 320-residue protein sequence, read N- to C-terminus: Cytochrome f (320 aa).

An N-terminal signal peptide occupies residues 1–35 (MQTRKTLSWIKEEITRSISVSLMIYIITGAYISNA). Heme contacts are provided by tyrosine 36, cysteine 56, cysteine 59, and histidine 60. Residues 286–306 (VQGLLFFLASVILAQIFLVLK) traverse the membrane as a helical segment.

Belongs to the cytochrome f family. As to quaternary structure, the 4 large subunits of the cytochrome b6-f complex are cytochrome b6, subunit IV (17 kDa polypeptide, petD), cytochrome f and the Rieske protein, while the 4 small subunits are PetG, PetL, PetM and PetN. The complex functions as a dimer. The cofactor is heme.

It is found in the plastid. It localises to the chloroplast thylakoid membrane. Component of the cytochrome b6-f complex, which mediates electron transfer between photosystem II (PSII) and photosystem I (PSI), cyclic electron flow around PSI, and state transitions. The polypeptide is Cytochrome f (Populus alba (White poplar)).